The following is a 154-amino-acid chain: Glycosylation-dependent cell adhesion molecule 1 (154 aa).

Residues 1–18 (MKFLCILLLASLAATSLA) form the signal peptide. A glycan (O-linked (GalNAc...) threonine; partial) is linked at Thr-34. Ser-48, Ser-53, Ser-57, Ser-59, and Ser-65 each carry phosphoserine. Positions 51 to 65 (DLSKEPSISREDLIS) are enriched in basic and acidic residues. The segment at 51-115 (DLSKEPSISR…EHAPSDASTT (65 aa)) is disordered. A glycan (N-linked (GlcNAc...) asparagine) is linked at Asn-96.

The protein belongs to the PP3/GlyCAM-1 family. As to expression, highly and specifically expressed in the lactating mammary gland.

It is found in the membrane. This Capra hircus (Goat) protein is Glycosylation-dependent cell adhesion molecule 1 (GLYCAM1).